The sequence spans 187 residues: Lipid A acyltransferase PagP (187 aa).

Residues 1-26 (MIVAKKYFLVLSFLFVQFALLPQAFS) form the signal peptide. Residues histidine 59, aspartate 102, and serine 103 contribute to the active site.

This sequence belongs to the lipid A palmitoyltransferase family. As to quaternary structure, homodimer.

It localises to the cell outer membrane. The catalysed reaction is a lipid A + a 1,2-diacyl-sn-glycero-3-phosphocholine = a hepta-acyl lipid A + a 2-acyl-sn-glycero-3-phosphocholine. The enzyme catalyses a lipid IVA + a 1,2-diacyl-sn-glycero-3-phosphocholine = a lipid IVB + a 2-acyl-sn-glycero-3-phosphocholine. It carries out the reaction a lipid IIA + a 1,2-diacyl-sn-glycero-3-phosphocholine = a lipid IIB + a 2-acyl-sn-glycero-3-phosphocholine. Functionally, transfers a fatty acid residue from the sn-1 position of a phospholipid to the N-linked hydroxyfatty acid chain on the proximal unit of lipid A or its precursors. This Citrobacter koseri (strain ATCC BAA-895 / CDC 4225-83 / SGSC4696) protein is Lipid A acyltransferase PagP.